The chain runs to 292 residues: MKILVPATSANLGPGFDCLGLSLKLFNETQIQKSGVFSISIGGEGSDNIFLKKNNIFVNIFYEIYEKLSGKKDNFRFIFQNNIPLSRGLGSSSAVIVGAIASAYYMSGFKVEKKRILDEALIYENHPDNIAPATLGGFVCSLVEKNKVYSIKKEIDKDLAAVVVIPNLAMSTEQSRQALAKNLSFNDAVFNLSHASFLTACFLEKKYEFLKFASQDKLHEINRMKNLPELFEVQKFALENKALMSTLSGSGSSFFSLAFKDDALALAKKMQTKFKDFSVQYLEFDDNGFEIC.

84 to 94 lines the ATP pocket; the sequence is PLSRGLGSSSA.

Belongs to the GHMP kinase family. Homoserine kinase subfamily.

The protein resides in the cytoplasm. The catalysed reaction is L-homoserine + ATP = O-phospho-L-homoserine + ADP + H(+). The protein operates within amino-acid biosynthesis; L-threonine biosynthesis; L-threonine from L-aspartate: step 4/5. In terms of biological role, catalyzes the ATP-dependent phosphorylation of L-homoserine to L-homoserine phosphate. The sequence is that of Homoserine kinase from Campylobacter jejuni subsp. doylei (strain ATCC BAA-1458 / RM4099 / 269.97).